The following is a 145-amino-acid chain: uncharacterized protein (145 aa).

A Phosphoserine modification is found at S67.

Expressed in retina and retinoblastoma.

This is an uncharacterized protein from Homo sapiens (Human).